Consider the following 225-residue polypeptide: Holliday junction branch migration complex subunit RuvA (225 aa).

Positions 1–71 (MISWINGELV…EDSDLLFGFT (71 aa)) are domain I. The domain II stretch occupies residues 72–150 (SKDQKFFFIE…SKIQIEEEKG (79 aa)). The segment at 151-161 (QEEFEITNPEI) is flexible linker. Residues 161–225 (IYKLMEDLQL…LDQGNSNLAR (65 aa)) are domain III.

It belongs to the RuvA family. In terms of assembly, homotetramer. Forms an RuvA(8)-RuvB(12)-Holliday junction (HJ) complex. HJ DNA is sandwiched between 2 RuvA tetramers; dsDNA enters through RuvA and exits via RuvB. An RuvB hexamer assembles on each DNA strand where it exits the tetramer. Each RuvB hexamer is contacted by two RuvA subunits (via domain III) on 2 adjacent RuvB subunits; this complex drives branch migration. In the full resolvosome a probable DNA-RuvA(4)-RuvB(12)-RuvC(2) complex forms which resolves the HJ.

Its subcellular location is the cytoplasm. In terms of biological role, the RuvA-RuvB-RuvC complex processes Holliday junction (HJ) DNA during genetic recombination and DNA repair, while the RuvA-RuvB complex plays an important role in the rescue of blocked DNA replication forks via replication fork reversal (RFR). RuvA specifically binds to HJ cruciform DNA, conferring on it an open structure. The RuvB hexamer acts as an ATP-dependent pump, pulling dsDNA into and through the RuvAB complex. HJ branch migration allows RuvC to scan DNA until it finds its consensus sequence, where it cleaves and resolves the cruciform DNA. This Prochlorococcus marinus (strain MIT 9215) protein is Holliday junction branch migration complex subunit RuvA.